We begin with the raw amino-acid sequence, 196 residues long: Probable signal peptidase I-1 (196 aa).

The Cytoplasmic segment spans residues 1 to 16; the sequence is MQNSPIPSPWQFIKEN. A helical transmembrane segment spans residues 17 to 35; that stretch reads IPLLMVALVLALLLRFFVA. Over 36 to 196 the chain is Periplasmic; the sequence is EPRYIPSDSM…FVPARTIINT (161 aa). Active-site residues include S44 and K94.

This sequence belongs to the peptidase S26 family.

The protein resides in the cell membrane. The catalysed reaction is Cleavage of hydrophobic, N-terminal signal or leader sequences from secreted and periplasmic proteins.. This chain is Probable signal peptidase I-1 (lepB1), found in Synechocystis sp. (strain ATCC 27184 / PCC 6803 / Kazusa).